The sequence spans 1052 residues: Multidrug resistance protein MdtB (1052 aa).

11 consecutive transmembrane segments (helical) span residues 15–37 (LFIL…GIIG), 345–362 (FELL…YLFL), 367–389 (ATII…MYFL), 396–418 (LTLM…VIEN), 438–460 (GEIG…PLLF), 472–494 (FAVT…TPMM), 535–557 (HPWL…YLLI), 867–889 (LWLI…ESFI), 909–931 (LMLT…IGIV), 968–990 (ILMT…GVGA), and 1000–1022 (MVGG…YLLF). The tract at residues 1032 to 1052 (KNRHRDEDIDSSELLNGQEPQ) is disordered.

The protein belongs to the resistance-nodulation-cell division (RND) (TC 2.A.6) family. MdtB subfamily. As to quaternary structure, part of a tripartite efflux system composed of MdtA, MdtB and MdtC. MdtB forms a heteromultimer with MdtC.

The protein resides in the cell inner membrane. The chain is Multidrug resistance protein MdtB from Yersinia pseudotuberculosis serotype I (strain IP32953).